Consider the following 147-residue polypeptide: Elongation factor Tu (147 aa).

Belongs to the GTP-binding elongation factor family. EF-Tu/EF-1A subfamily. As to quaternary structure, monomer.

It localises to the cytoplasm. Functionally, this protein promotes the GTP-dependent binding of aminoacyl-tRNA to the A-site of ribosomes during protein biosynthesis. This is Elongation factor Tu (tuf) from Fructilactobacillus sanfranciscensis (Lactobacillus sanfranciscensis).